A 512-amino-acid polypeptide reads, in one-letter code: Probable cobyric acid synthase (512 aa).

The GATase cobBQ-type domain occupies 275–460; that stretch reads SVTVAVPHLP…LHGLFGNDAA (186 aa). Catalysis depends on Cys353, which acts as the Nucleophile. Residue His452 is part of the active site.

This sequence belongs to the CobB/CobQ family. CobQ subfamily.

The protein operates within cofactor biosynthesis; adenosylcobalamin biosynthesis. In terms of biological role, catalyzes amidations at positions B, D, E, and G on adenosylcobyrinic A,C-diamide. NH(2) groups are provided by glutamine, and one molecule of ATP is hydrogenolyzed for each amidation. The sequence is that of Probable cobyric acid synthase from Halobacterium salinarum (strain ATCC 29341 / DSM 671 / R1).